The following is a 428-amino-acid chain: Glutamate-1-semialdehyde 2,1-aminomutase 1 (428 aa).

An N6-(pyridoxal phosphate)lysine modification is found at Lys267.

The protein belongs to the class-III pyridoxal-phosphate-dependent aminotransferase family. HemL subfamily. As to quaternary structure, homodimer. The cofactor is pyridoxal 5'-phosphate.

Its subcellular location is the cytoplasm. It carries out the reaction (S)-4-amino-5-oxopentanoate = 5-aminolevulinate. It participates in porphyrin-containing compound metabolism; protoporphyrin-IX biosynthesis; 5-aminolevulinate from L-glutamyl-tRNA(Glu): step 2/2. This Staphylococcus aureus (strain NCTC 8325 / PS 47) protein is Glutamate-1-semialdehyde 2,1-aminomutase 1 (hemL1).